The primary structure comprises 68 residues: Conotoxin Cal14.13b (68 aa).

Residues 1–20 (MKLCVVIVLLMLAMPFNGGE) form the signal peptide. A propeptide spanning residues 21–68 (ASRFFNQHARSQRSGMKTRGIWCDPPCPEGETCRGGECSDEFNGDMGR) is cleaved from the precursor. Met66 carries the methionine amide modification.

In terms of processing, contains 2 disulfide bonds. Expressed by the venom duct.

It localises to the secreted. Its function is as follows. Probable neurotoxin with unknown target. Possibly targets ion channels. The polypeptide is Conotoxin Cal14.13b (Californiconus californicus (California cone)).